The sequence spans 138 residues: Basic phospholipase A2 homolog G6K49 (138 aa).

An N-terminal signal peptide occupies residues 1 to 16 (MRTLWIMAVLLLGVEG). 7 cysteine pairs are disulfide-bonded: Cys42/Cys132, Cys44/Cys60, Cys59/Cys112, Cys65/Cys138, Cys66/Cys105, Cys73/Cys98, and Cys91/Cys103. Residues 122–133 (KKHRVTVKFLCK) form an important for membrane-damaging activities in eukaryotes and bacteria; heparin-binding region.

Belongs to the phospholipase A2 family. Group II subfamily. K49 sub-subfamily. Homodimer; non-covalently linked. Expressed by the venom gland.

The protein localises to the secreted. Snake venom phospholipase A2 (PLA2) that lacks enzymatic activity. Displays myotoxic activities. A model of myotoxic mechanism has been proposed: an apo Lys49-PLA2 is activated by the entrance of a hydrophobic molecule (e.g. fatty acid) at the hydrophobic channel of the protein leading to a reorientation of a monomer. This reorientation causes a transition between 'inactive' to 'active' states, causing alignment of C-terminal and membrane-docking sites (MDoS) side-by-side and putting the membrane-disruption sites (MDiS) in the same plane, exposed to solvent and in a symmetric position for both monomers. The MDoS region stabilizes the toxin on membrane by the interaction of charged residues with phospholipid head groups. Subsequently, the MDiS region destabilizes the membrane with penetration of hydrophobic residues. This insertion causes a disorganization of the membrane, allowing an uncontrolled influx of ions (i.e. calcium and sodium), and eventually triggering irreversible intracellular alterations and cell death. The polypeptide is Basic phospholipase A2 homolog G6K49 (Calloselasma rhodostoma (Malayan pit viper)).